We begin with the raw amino-acid sequence, 123 residues long: N(4)-acetylcytidine amidohydrolase (123 aa).

Residues 6 to 101 form the ASCH domain; that stretch reads ITFYQRFEAD…EIIFWVIQFS (96 aa). Residue Lys-21 is the Proton acceptor of the active site. The active-site Nucleophile is Ser-24. Glu-74 functions as the Proton donor in the catalytic mechanism.

The protein belongs to the N(4)-acetylcytidine amidohydrolase family.

It carries out the reaction N(4)-acetylcytidine + H2O = cytidine + acetate + H(+). The enzyme catalyses N(4)-acetyl-2'-deoxycytidine + H2O = 2'-deoxycytidine + acetate + H(+). It catalyses the reaction N(4)-acetylcytosine + H2O = cytosine + acetate + H(+). Catalyzes the hydrolysis of N(4)-acetylcytidine (ac4C). The chain is N(4)-acetylcytidine amidohydrolase from Haemophilus influenzae (strain ATCC 51907 / DSM 11121 / KW20 / Rd).